The following is a 250-amino-acid chain: UPF0524 protein C3orf70 homolog (250 aa).

Residues 201–250 (ESCDEDTEEGAELSSEEDYSPESSWEPDECTLLSPSQSDLEVIETIETTV) form a disordered region. Positions 202-229 (SCDEDTEEGAELSSEEDYSPESSWEPDE) are enriched in acidic residues.

This sequence belongs to the UPF0524 family.

In terms of biological role, may play a role in neuronal and neurobehavioral development. The polypeptide is UPF0524 protein C3orf70 homolog (Bos taurus (Bovine)).